The primary structure comprises 299 residues: Porphobilinogen deaminase (299 aa).

Cys-234 is modified (S-(dipyrrolylmethanemethyl)cysteine).

This sequence belongs to the HMBS family. Monomer. The cofactor is dipyrromethane.

It carries out the reaction 4 porphobilinogen + H2O = hydroxymethylbilane + 4 NH4(+). It participates in porphyrin-containing compound metabolism; protoporphyrin-IX biosynthesis; coproporphyrinogen-III from 5-aminolevulinate: step 2/4. Its function is as follows. Tetrapolymerization of the monopyrrole PBG into the hydroxymethylbilane pre-uroporphyrinogen in several discrete steps. The chain is Porphobilinogen deaminase from Corynebacterium efficiens (strain DSM 44549 / YS-314 / AJ 12310 / JCM 11189 / NBRC 100395).